A 228-amino-acid polypeptide reads, in one-letter code: ATP-dependent dethiobiotin synthetase BioD (228 aa).

Residue 12-17 (EIGKTT) participates in ATP binding. Residue threonine 16 participates in Mg(2+) binding. Residue lysine 37 is part of the active site. Serine 41 contributes to the substrate binding site. Residues aspartate 54, 116 to 119 (EGAG), and 205 to 207 (PRL) contribute to the ATP site. Positions 54 and 116 each coordinate Mg(2+).

This sequence belongs to the dethiobiotin synthetase family. As to quaternary structure, homodimer. It depends on Mg(2+) as a cofactor.

Its subcellular location is the cytoplasm. It carries out the reaction (7R,8S)-7,8-diammoniononanoate + CO2 + ATP = (4R,5S)-dethiobiotin + ADP + phosphate + 3 H(+). The protein operates within cofactor biosynthesis; biotin biosynthesis; biotin from 7,8-diaminononanoate: step 1/2. In terms of biological role, catalyzes a mechanistically unusual reaction, the ATP-dependent insertion of CO2 between the N7 and N8 nitrogen atoms of 7,8-diaminopelargonic acid (DAPA, also called 7,8-diammoniononanoate) to form a ureido ring. The polypeptide is ATP-dependent dethiobiotin synthetase BioD (Pseudomonas aeruginosa (strain ATCC 15692 / DSM 22644 / CIP 104116 / JCM 14847 / LMG 12228 / 1C / PRS 101 / PAO1)).